The chain runs to 430 residues: MREFMHYVTNAFYGATGWNDDNTYKELNVTARELIDFPLPRGLRLTLSSLATPHFATSYQLGSVGIVDGSISYLHSSVPLTGIAARSDRIPLPALLRSYRRLHDLGSKDQQQYVGAEHAPTESTPPAVAKVDGSSLLYGRLYLPQSLLEGMVVRRFTPALQVQLSAVSERSLRNGGTLLGLVQYDKRKYGVEGLASTDGGLLGVRGLYNFGGDASSSAMNPPSGTSASETNGSGPSVEKERIYGRFSAGAELYYGTLNKSGGMSLGARFATLPAHRGTPLTATLTINPLMGNINATYAVLAREYCSLATKMEFNVYSYESEWAVGVELWSNRRPAGFLLGANPNDQAEPAPEPPRKSNERSFQAKMEWRLDDPEPEPQSPVAGEKSADDGPKEEYKGVLKARFDQNFRFGLLWEGRVKSLIFSLGTGRSD.

A compositionally biased stretch (polar residues) spans 215–234 (SSSAMNPPSGTSASETNGSG). Disordered regions lie at residues 215 to 237 (SSSA…GPSV) and 339 to 393 (LGAN…GPKE).

The protein belongs to the MDM10 family. In terms of assembly, component of the ER-mitochondria encounter structure (ERMES) or MDM complex, composed of MMM1, MDM10, MDM12 and MDM34. Associates with the mitochondrial outer membrane sorting assembly machinery SAM(core) complex.

Its subcellular location is the mitochondrion outer membrane. Component of the ERMES/MDM complex, which serves as a molecular tether to connect the endoplasmic reticulum and mitochondria. Components of this complex are involved in the control of mitochondrial shape and protein biogenesis and may function in phospholipid exchange. MDM10 is involved in the late assembly steps of the general translocase of the mitochondrial outer membrane (TOM complex). Functions in the TOM40-specific route of the assembly of outer membrane beta-barrel proteins, including the association of TOM40 with the receptor TOM22 and small TOM proteins. Can associate with the SAM(core) complex as well as the MDM12-MMM1 complex, both involved in late steps of the major beta-barrel assembly pathway, that is responsible for biogenesis of all outer membrane beta-barrel proteins. May act as a switch that shuttles between both complexes and channels precursor proteins into the TOM40-specific pathway. Plays a role in mitochondrial morphology and in the inheritance of mitochondria. In Chaetomium globosum (strain ATCC 6205 / CBS 148.51 / DSM 1962 / NBRC 6347 / NRRL 1970) (Soil fungus), this protein is Mitochondrial distribution and morphology protein 10.